The following is a 135-amino-acid chain: MLSPKRTRFRKQHRGRMKGVSSRGNHICFGRYALQALEPAWITSRQIEAGRRAMTRYARRGGKIWVRVFPDKPITVRPAETRMGSGKGSPEYWVSVIKPGRILHEMGGVPETVARAAMEIAACKMPIRTQFISAK.

Residues 1-17 are compositionally biased toward basic residues; sequence MLSPKRTRFRKQHRGRM. Residues 1 to 21 form a disordered region; sequence MLSPKRTRFRKQHRGRMKGVS.

It belongs to the universal ribosomal protein uL16 family. As to quaternary structure, part of the 50S ribosomal subunit.

It is found in the plastid. Its subcellular location is the chloroplast. The polypeptide is Large ribosomal subunit protein uL16c (Amborella trichopoda).